The following is a 329-amino-acid chain: MVKTQRVVITPGEPAGIGPDLVVQLAQREWPVELVVCADATLLTDRAAMLGLPLTLRPYSPNSPAQPQTTGTLTLLPVALRESVTAGQLAIENGHYVVETLARACDGCLNGEFAALITGPVHKGVINDASIPFTGHTEFFEERSQAKKVVMMLATEELRVALATTHLPLRDIADAITPALLHEVIAILHHDLRTKFGIAEPRILVCGLNPHAGEGGHMGTEEIDTIIPVLDELRAQGMKLNGPLPADTLFQPKYLDNADAVLAMYHDQGLPVLKYQGFGRGVNITLGLPFIRTSVDHGTALELAGRGEADVGSFITALNLAIKMIVNTQ.

Substrate-binding residues include histidine 136 and threonine 137. Positions 166, 211, and 266 each coordinate a divalent metal cation. Substrate is bound by residues lysine 274, asparagine 283, and arginine 292.

This sequence belongs to the PdxA family. In terms of assembly, homodimer. It depends on Zn(2+) as a cofactor. Mg(2+) is required as a cofactor. Co(2+) serves as cofactor.

Its subcellular location is the cytoplasm. It carries out the reaction 4-(phosphooxy)-L-threonine + NAD(+) = 3-amino-2-oxopropyl phosphate + CO2 + NADH. It participates in cofactor biosynthesis; pyridoxine 5'-phosphate biosynthesis; pyridoxine 5'-phosphate from D-erythrose 4-phosphate: step 4/5. In terms of biological role, catalyzes the NAD(P)-dependent oxidation of 4-(phosphooxy)-L-threonine (HTP) into 2-amino-3-oxo-4-(phosphooxy)butyric acid which spontaneously decarboxylates to form 3-amino-2-oxopropyl phosphate (AHAP). This is 4-hydroxythreonine-4-phosphate dehydrogenase from Shigella flexneri serotype 5b (strain 8401).